Consider the following 483-residue polypeptide: MADSIQPEKHIHFIGMGGIGMSALALILAERGHSVSGSDRKLTPAMQALETKALAIFESQVSKNFAHLQSRGIEEPLVVVSTAIPSTNPELIEAQRLDLTIWHRSDLLAWLIEQQPSIAVAGSHGKTTTSTVLTTLLATVGEDPTAVIGGVVPCYGSNGHKGNGRLLVAEADESDGSLVKFKASLGIITNLELDHTDHYRNLDDLIETMKTFGRGCKRLLINHDDPILKEHFQADACWSVHHVETADYAALPVQLDGDRTIADYFEQGQKVGQITLPLPGLHNLSNVVAALAACRMEGVPLEALLLAVTELRSPGRRFDFRGEWQDRQVVDDYAHHPSEVQATLTMAQLMVQSGRSPLPRTPQRLLAVFQPHRYSRTQEFLNAFAQALVSADALVLAPIYGAGEQPIEGINSELLARSIRLIDPNQPVFVASTMEELAGLVKQHSQPDDLILAMGAGDVNSLWERLSQEGIGGEASCSPAIAA.

Gly-122 to Thr-128 is an ATP binding site.

The protein belongs to the MurCDEF family.

The protein resides in the cytoplasm. The enzyme catalyses UDP-N-acetyl-alpha-D-muramate + L-alanine + ATP = UDP-N-acetyl-alpha-D-muramoyl-L-alanine + ADP + phosphate + H(+). The protein operates within cell wall biogenesis; peptidoglycan biosynthesis. Its function is as follows. Cell wall formation. The sequence is that of UDP-N-acetylmuramate--L-alanine ligase from Synechococcus sp. (strain CC9311).